A 145-amino-acid chain; its full sequence is Bacilliredoxin GK2368 (145 aa).

Belongs to the bacilliredoxin family.

The polypeptide is Bacilliredoxin GK2368 (Geobacillus kaustophilus (strain HTA426)).